The sequence spans 357 residues: SUN domain-containing protein 3 (357 aa).

Residues 1–47 (MSGKTKARRAAMFFRRCSEDASGSASGNALLSEDENPDANGVTRSWK) are Nuclear-facing. The helical transmembrane segment at 48–64 (IILSTMLTLTFLLVGLL) threads the bilayer. Residues 65–357 (NHQWLKETDV…RVHGTPGKHI (293 aa)) lie on the Perinuclear space side of the membrane. Positions 98-146 (RLRMPKEQLELLKKESQNLENNFRQILFLIEQIDVLKALLRDMKDGMDN) form a coiled coil. The 162-residue stretch at 193–354 (GASIIEAGTS…YRFRVHGTPG (162 aa)) folds into the SUN domain.

Self-associates. Interacts with SYNE1 and SPAG4/SUN4. Proposed to form a spermatogenesis-specific LINC complex with SYNE1 during sperm head formation possibly implicating a SUN domain-based heterotrimer with SPAG4/SUN4 associating with SYNE1.

It localises to the membrane. The protein localises to the nucleus envelope. It is found in the nucleus inner membrane. As a probable component of the LINC (LInker of Nucleoskeleton and Cytoskeleton) complex, involved in the connection between the nuclear lamina and the cytoskeleton. The nucleocytoplasmic interactions established by the LINC complex play an important role in the transmission of mechanical forces across the nuclear envelope and in nuclear movement and positioning. May be involved in nuclear remodeling during sperm head formation in spermatogenesis. A probable SUN3:SYNE1 LINC complex may tether spermatid nuclei to posterior cytoskeletal structures such as the manchette. In Homo sapiens (Human), this protein is SUN domain-containing protein 3 (SUN3).